The primary structure comprises 143 residues: Sirohydrochlorin cobaltochelatase (143 aa).

His-18 (proton acceptor) is an active-site residue. His-18 provides a ligand contact to Co(2+). His-18 lines the Ni(2+) pocket. Residues Arg-53 and 78 to 83 (LAHGVH) each bind substrate. His-83 contacts Co(2+). His-83 is a Ni(2+) binding site.

The protein belongs to the CbiX family. CbiXS subfamily. As to quaternary structure, homotetramer; dimer of dimers.

The catalysed reaction is Co-sirohydrochlorin + 2 H(+) = sirohydrochlorin + Co(2+). It catalyses the reaction Ni-sirohydrochlorin + 2 H(+) = sirohydrochlorin + Ni(2+). It participates in cofactor biosynthesis; adenosylcobalamin biosynthesis; cob(II)yrinate a,c-diamide from sirohydrochlorin (anaerobic route): step 1/10. Catalyzes the insertion of Co(2+) into sirohydrochlorin as part of the anaerobic pathway to cobalamin biosynthesis. Involved in the biosynthesis of the unique nickel-containing tetrapyrrole coenzyme F430, the prosthetic group of methyl-coenzyme M reductase (MCR), which plays a key role in methanogenesis and anaerobic methane oxidation (Potential). Catalyzes the insertion of Ni(2+) into sirohydrochlorin to yield Ni-sirohydrochlorin (Potential). The chain is Sirohydrochlorin cobaltochelatase from Methanothermobacter thermautotrophicus (strain ATCC 29096 / DSM 1053 / JCM 10044 / NBRC 100330 / Delta H) (Methanobacterium thermoautotrophicum).